The chain runs to 469 residues: Zinc finger CCCH domain-containing protein 30 (469 aa).

The C3H1-type zinc-finger motif lies at 415–443 (VRPMKPCAYFNSPKGCRNGASCTFLHDAS). The interval 444–469 (APTRKDHQKQKGSKRIKLDNTMGGRN) is disordered. Residues 449–458 (DHQKQKGSKR) show a composition bias toward basic residues.

The polypeptide is Zinc finger CCCH domain-containing protein 30 (Oryza sativa subsp. japonica (Rice)).